We begin with the raw amino-acid sequence, 595 residues long: ATPase family AAA domain-containing protein 3 (595 aa).

Residues 1–48 (MSWLFGVQKNATPQIPDDFQAGAAPGGPQQPGQGQRQEGNSKMAYSFD) form a disordered region. At 1 to 243 (MSWLFGVQKN…LNQFLNDKTK (243 aa)) the chain is on the mitochondrial intermembrane side. Over residues 20 to 35 (QAGAAPGGPQQPGQGQ) the composition is skewed to low complexity. Coiled-coil stretches lie at residues 80–107 (VTRQ…HIRV) and 140–175 (EELA…EHEL). Residues 244–260 (IAAAVGGLTALAVGWYT) form a helical membrane-spanning segment. The Mitochondrial matrix segment spans residues 261-595 (AKRGTGVTAR…GTTLKRETAV (335 aa)). 349-356 (GPPGTGKT) is an ATP binding site. Positions 592–595 (ETAV) match the PDZ-binding motif.

This sequence belongs to the AAA ATPase family.

It is found in the mitochondrion inner membrane. The protein localises to the mitochondrion matrix. Its subcellular location is the mitochondrion nucleoid. In terms of biological role, essential for mitochondrial network organization, mitochondrial metabolism and cell growth at organism and cellular level. Important during development for the up-regulation of mitochondrial activity during the transition to higher larval stages. Regulates mitochondrial iron homeostasis. May play an important role in mitochondrial protein synthesis. May also participate in mitochondrial DNA replication. May bind to mitochondrial DNA D-loops and contribute to nucleoid stability. Plays a role in regulating the production of reactive oxygen species in response to heat stress. The protein is ATPase family AAA domain-containing protein 3 of Caenorhabditis elegans.